The sequence spans 255 residues: 5'-nucleotidase SurE (255 aa).

Residues aspartate 8, aspartate 9, serine 39, and asparagine 91 each contribute to the a divalent metal cation site.

It belongs to the SurE nucleotidase family. A divalent metal cation is required as a cofactor.

The protein localises to the cytoplasm. It catalyses the reaction a ribonucleoside 5'-phosphate + H2O = a ribonucleoside + phosphate. Its function is as follows. Nucleotidase that shows phosphatase activity on nucleoside 5'-monophosphates. The chain is 5'-nucleotidase SurE from Acinetobacter baylyi (strain ATCC 33305 / BD413 / ADP1).